Reading from the N-terminus, the 160-residue chain is Dihydrofolate reductase (160 aa).

Residues 1-160 (MLIAIWAMTQ…NVNYYRKKQQ (160 aa)) enclose the DHFR domain. Residue 5-7 (IWA) coordinates substrate. NADP(+)-binding positions include 6–7 (WA) and 14–19 (IGNNNT). Position 27 (Glu-27) interacts with substrate. Residue 43–46 (GRKT) coordinates NADP(+). Arg-57 is a binding site for substrate. Residues 62-65 (LSKD) and 101-106 (CGGKSV) each bind NADP(+). A substrate-binding site is contributed by Ser-120.

This sequence belongs to the dihydrofolate reductase family.

The catalysed reaction is (6S)-5,6,7,8-tetrahydrofolate + NADP(+) = 7,8-dihydrofolate + NADPH + H(+). The protein operates within cofactor biosynthesis; tetrahydrofolate biosynthesis; 5,6,7,8-tetrahydrofolate from 7,8-dihydrofolate: step 1/1. Its function is as follows. Key enzyme in folate metabolism. Catalyzes an essential reaction for de novo glycine and purine synthesis, and for DNA precursor synthesis. The protein is Dihydrofolate reductase (folA) of Mycoplasma genitalium (strain ATCC 33530 / DSM 19775 / NCTC 10195 / G37) (Mycoplasmoides genitalium).